The chain runs to 474 residues: Gamma-aminobutyric acid receptor subunit gamma-2 (474 aa).

The signal sequence occupies residues 1–38 (MSSPNTWSIGSSVYSPVFSQKMTLWILLLLSLYPGFTS). Residues 39 to 274 (QKSDDDYEDY…FDLSRRMGYF (236 aa)) lie on the Extracellular side of the membrane. 2 N-linked (GlcNAc...) asparagine glycosylation sites follow: Asn51 and Asn128. Cysteines 189 and 203 form a disulfide. Asn246 carries an N-linked (GlcNAc...) asparagine glycan. Residues 275–295 (TIQTYIPCTLIVVLSWVSFWI) traverse the membrane as a helical segment. Residues 296–301 (NKDAVP) are Cytoplasmic-facing. A helical membrane pass occupies residues 302–321 (ARTSLGITTVLTMTTLSTIA). The Extracellular segment spans residues 322 to 333 (RKSLPKVSYVTA). Residues 334 to 358 (MDLFVSVCFIFVFSALVEYGTLHYF) traverse the membrane as a helical segment. At 359–450 (VSNRKPSKDK…IHIRIAKMDS (92 aa)) the chain is on the cytoplasmic side. A Phosphoserine; by PKC modification is found at Ser381. Residues 451-472 (YARIFFPTAFCLFNLVYWVSYL) form a helical membrane-spanning segment. Residues 473 to 474 (YL) are Extracellular-facing.

It belongs to the ligand-gated ion channel (TC 1.A.9) family. Gamma-aminobutyric acid receptor (TC 1.A.9.5) subfamily. GABRG2 sub-subfamily. Heteropentamer, formed by a combination of alpha (GABRA1-6), beta (GABRB1-3), gamma (GABRG1-3), delta (GABRD), epsilon (GABRE), rho (GABRR1-3), pi (GABRP) and theta (GABRQ) chains, each subunit exhibiting distinct physiological and pharmacological properties. Interacts with GABARAP. Interacts with KIF21B. Identified in a complex of 720 kDa composed of LHFPL4, NLGN2, GABRA1, GABRB2, GABRG2 and GABRB3. Interacts with LHFPL4. Interacts with SHISA7; interaction leads to the regulation of GABA(A) receptor trafficking, channel deactivation kinetics and pharmacology. Post-translationally, glycosylated. In terms of processing, palmitoylated by ZDHHC3/GODZ; required for the accumulation of GABA(A) receptors at the postsynaptic membrane of inhibitory GABAergic synapses. In terms of tissue distribution, expressed in brain neurons (at protein level).

The protein resides in the postsynaptic cell membrane. It localises to the cell membrane. The protein localises to the cell projection. Its subcellular location is the dendrite. It is found in the cytoplasmic vesicle membrane. It carries out the reaction chloride(in) = chloride(out). With respect to regulation, allosterically activated by benzodiazepines. Activated by pentobarbital. Inhibited by the antagonist bicuculline. Inhibited by zinc ions. Potentiated by histamine. Its function is as follows. Gamma subunit of the heteropentameric ligand-gated chloride channel gated by gamma-aminobutyric acid (GABA), a major inhibitory neurotransmitter in the brain. GABA-gated chloride channels, also named GABA(A) receptors (GABAAR), consist of five subunits arranged around a central pore and contain GABA active binding site(s) located at the alpha and beta subunit interface(s). When activated by GABA, GABAARs selectively allow the flow of chloride anions across the cell membrane down their electrochemical gradient. Gamma-2/GABRG2-containing GABAARs are found at both synaptic and extrasynaptic sites. Chloride influx into the postsynaptic neuron following GABAAR opening decreases the neuron ability to generate a new action potential, thereby reducing nerve transmission. GABAARs containing alpha-1 and beta-2 or -3 subunits exhibit synaptogenic activity; the gamma-2 subunit being necessary but not sufficient to induce rapid synaptic contacts formation. Extrasynaptic gamma-2-containing receptors contribute to the tonic GABAergic inhibition. GABAARs function also as histamine receptor where histamine binds at the interface of two neighboring beta subunits and potentiates GABA response in a gamma-2 subunit-controlled manner. The protein is Gamma-aminobutyric acid receptor subunit gamma-2 of Mus musculus (Mouse).